The chain runs to 196 residues: Carnitine operon protein CaiE (196 aa).

Residues 173–196 are disordered; the sequence is TQPLRQMEENRPRLQGTTDVTPKR. The segment covering 187-196 has biased composition (polar residues); that stretch reads QGTTDVTPKR.

This sequence belongs to the transferase hexapeptide repeat family.

Its pathway is amine and polyamine metabolism; carnitine metabolism. Functionally, overproduction of CaiE stimulates the activity of CaiB and CaiD. This is Carnitine operon protein CaiE from Shigella flexneri serotype 5b (strain 8401).